Here is a 492-residue protein sequence, read N- to C-terminus: Catalase isozyme 1 (492 aa).

Catalysis depends on residues His-65 and Asn-138. Tyr-348 provides a ligand contact to heme.

This sequence belongs to the catalase family. In terms of assembly, homotetramer. Requires heme as cofactor.

Its subcellular location is the peroxisome. It is found in the glyoxysome. It catalyses the reaction 2 H2O2 = O2 + 2 H2O. In terms of biological role, occurs in almost all aerobically respiring organisms and serves to protect cells from the toxic effects of hydrogen peroxide. In Solanum tuberosum (Potato), this protein is Catalase isozyme 1 (CAT1).